The chain runs to 429 residues: Glutamate-1-semialdehyde 2,1-aminomutase 1 (429 aa).

Lys268 bears the N6-(pyridoxal phosphate)lysine mark.

It belongs to the class-III pyridoxal-phosphate-dependent aminotransferase family. HemL subfamily. Homodimer. Requires pyridoxal 5'-phosphate as cofactor.

The protein resides in the cytoplasm. It carries out the reaction (S)-4-amino-5-oxopentanoate = 5-aminolevulinate. It functions in the pathway porphyrin-containing compound metabolism; protoporphyrin-IX biosynthesis; 5-aminolevulinate from L-glutamyl-tRNA(Glu): step 2/2. The chain is Glutamate-1-semialdehyde 2,1-aminomutase 1 from Staphylococcus haemolyticus (strain JCSC1435).